Consider the following 248-residue polypeptide: ATP synthase subunit a, chloroplastic (248 aa).

The next 5 membrane-spanning stretches (helical) occupy residues 37 to 57, 96 to 116, 135 to 155, 200 to 220, and 221 to 241; these read AQVL…AFVT, VPFI…GALF, INTT…AGLH, LVVA…MMFL, and GLFT…AYIG.

Belongs to the ATPase A chain family. F-type ATPases have 2 components, CF(1) - the catalytic core - and CF(0) - the membrane proton channel. CF(1) has five subunits: alpha(3), beta(3), gamma(1), delta(1), epsilon(1). CF(0) has four main subunits: a, b, b' and c.

The protein localises to the plastid. It is found in the chloroplast thylakoid membrane. Its function is as follows. Key component of the proton channel; it plays a direct role in the translocation of protons across the membrane. The sequence is that of ATP synthase subunit a, chloroplastic from Psilotum nudum (Whisk fern).